We begin with the raw amino-acid sequence, 428 residues long: MRVVVLGSGVVGVTSAYYLARAGHEVTVIDREAGPALETSFANAGQISPGYAAPWAAPGVPLKAVKWMFQKHAPLAIRLDGTQFQLQWMWQMLQNCTSARYAVNKGRMVRLAEYSRDCLQALRAETGIQYEGRTGGTLQLFRTQQQLDGAAKDIAVLEEANVPYELLMPADLARAEPALAATSHKLTGGLRLPGDETGDCQLFTTRLAALAEQLGVKFRYNTPIDALAMEGGRIAGVKCGNEMVRADNFVVALGSYSTQFLSGLVKIPVYPLKGYSITAPIVDAKSAPVSTVLDETYKIAITRFDDRIRVGGMAEIVGFDKKLKQARRETLEMCVNDLFPGGGDTSKATFWTGLRPMTPDGTPIVGRTPVSNLFLNTGHGTLGWTMSCGSGQLLADLISGKRPAIQSGDLSVHRYLGETAGQTRPAYA.

3 to 17 (VVVLGSGVVGVTSAY) lines the FAD pocket.

This sequence belongs to the DadA oxidoreductase family. FAD is required as a cofactor.

The catalysed reaction is a D-alpha-amino acid + A + H2O = a 2-oxocarboxylate + AH2 + NH4(+). It functions in the pathway amino-acid degradation; D-alanine degradation; NH(3) and pyruvate from D-alanine: step 1/1. In terms of biological role, oxidative deamination of D-amino acids. This is D-amino acid dehydrogenase from Paraburkholderia phymatum (strain DSM 17167 / CIP 108236 / LMG 21445 / STM815) (Burkholderia phymatum).